A 319-amino-acid polypeptide reads, in one-letter code: Tetrahydromethanopterin S-methyltransferase subunit H (319 aa).

The protein belongs to the MtrH family. The complex is composed of 8 subunits; MtrA, MtrB, MtrC, MtrD, MtrE, MtrF, MtrG and MtrH.

The enzyme catalyses 5-methyl-5,6,7,8-tetrahydromethanopterin + coenzyme M + 2 Na(+)(in) = 5,6,7,8-tetrahydromethanopterin + methyl-coenzyme M + 2 Na(+)(out). The protein operates within one-carbon metabolism; methanogenesis from CO(2); methyl-coenzyme M from 5,10-methylene-5,6,7,8-tetrahydromethanopterin: step 2/2. Functionally, part of a complex that catalyzes the formation of methyl-coenzyme M and tetrahydromethanopterin from coenzyme M and methyl-tetrahydromethanopterin. This is an energy-conserving, sodium-ion translocating step. MtrH catalyzes the transfer of the methyl group from methyl-tetrahydromethanopterin to the corrinoid prosthetic group of MtrA. The chain is Tetrahydromethanopterin S-methyltransferase subunit H from Methanocaldococcus jannaschii (strain ATCC 43067 / DSM 2661 / JAL-1 / JCM 10045 / NBRC 100440) (Methanococcus jannaschii).